A 453-amino-acid chain; its full sequence is Trigger factor (453 aa).

Positions 171–256 (GDRVTINFKG…ATSIEAPQDI (86 aa)) constitute a PPIase FKBP-type domain.

Belongs to the FKBP-type PPIase family. Tig subfamily.

Its subcellular location is the cytoplasm. The enzyme catalyses [protein]-peptidylproline (omega=180) = [protein]-peptidylproline (omega=0). Involved in protein export. Acts as a chaperone by maintaining the newly synthesized protein in an open conformation. Functions as a peptidyl-prolyl cis-trans isomerase. The sequence is that of Trigger factor from Bradyrhizobium diazoefficiens (strain JCM 10833 / BCRC 13528 / IAM 13628 / NBRC 14792 / USDA 110).